The sequence spans 247 residues: Fasciclin-like arabinogalactan protein 13 (247 aa).

The signal sequence occupies residues methionine 1–alanine 25. An FAS1 domain is found at proline 34–leucine 179. Residues asparagine 36, asparagine 55, asparagine 68, asparagine 141, and asparagine 150 are each glycosylated (N-linked (GlcNAc...) asparagine). Residues lysine 189–methionine 228 are disordered. Glycine 224 carries GPI-anchor amidated glycine lipidation. Residues serine 225–leucine 247 constitute a propeptide, removed in mature form.

Belongs to the fasciclin-like AGP family.

It localises to the cell membrane. In terms of biological role, may be a cell surface adhesion protein. This Arabidopsis thaliana (Mouse-ear cress) protein is Fasciclin-like arabinogalactan protein 13 (FLA13).